Here is a 108-residue protein sequence, read N- to C-terminus: UPF0235 protein APE_0182.1 (108 aa).

This sequence belongs to the UPF0235 family.

The chain is UPF0235 protein APE_0182.1 from Aeropyrum pernix (strain ATCC 700893 / DSM 11879 / JCM 9820 / NBRC 100138 / K1).